A 405-amino-acid polypeptide reads, in one-letter code: L-carnitine CoA-transferase (405 aa).

The CoA site is built by Lys-97 and Arg-104. Asp-169 serves as the catalytic Nucleophile.

The protein belongs to the CoA-transferase III family. CaiB subfamily. Homodimer.

The protein localises to the cytoplasm. It carries out the reaction crotonobetainyl-CoA + (R)-carnitine = crotonobetaine + (R)-carnitinyl-CoA. The enzyme catalyses 4-(trimethylamino)butanoyl-CoA + (R)-carnitine = (R)-carnitinyl-CoA + 4-(trimethylamino)butanoate. It functions in the pathway amine and polyamine metabolism; carnitine metabolism. Functionally, catalyzes the reversible transfer of the CoA moiety from gamma-butyrobetainyl-CoA to L-carnitine to generate L-carnitinyl-CoA and gamma-butyrobetaine. Is also able to catalyze the reversible transfer of the CoA moiety from gamma-butyrobetainyl-CoA or L-carnitinyl-CoA to crotonobetaine to generate crotonobetainyl-CoA. The protein is L-carnitine CoA-transferase of Escherichia fergusonii (strain ATCC 35469 / DSM 13698 / CCUG 18766 / IAM 14443 / JCM 21226 / LMG 7866 / NBRC 102419 / NCTC 12128 / CDC 0568-73).